Reading from the N-terminus, the 229-residue chain is Heptaprenylglyceryl phosphate synthase (229 aa).

Position 12 (Lys-12) interacts with sn-glycerol 1-phosphate. Residues Asp-14 and Thr-40 each contribute to the Mg(2+) site. Sn-glycerol 1-phosphate is bound by residues 159 to 164 (YIEYSG), Gly-189, and 209 to 210 (GN).

It belongs to the GGGP/HepGP synthase family. Group I subfamily. Homodimer. Requires Mg(2+) as cofactor.

It carries out the reaction sn-glycerol 1-phosphate + all-trans-heptaprenyl diphosphate = 3-heptaprenyl-sn-glycero-1-phosphate + diphosphate. It participates in membrane lipid metabolism; glycerophospholipid metabolism. In terms of biological role, prenyltransferase that catalyzes in vivo the transfer of the heptaprenyl moiety of heptaprenyl pyrophosphate (HepPP; 35 carbon atoms) to the C3 hydroxyl of sn-glycerol-1-phosphate (G1P), producing heptaprenylglyceryl phosphate (HepGP). This reaction is an ether-bond-formation step in the biosynthesis of archaea-type G1P-based membrane lipids found in Bacillales. This chain is Heptaprenylglyceryl phosphate synthase, found in Oceanobacillus iheyensis (strain DSM 14371 / CIP 107618 / JCM 11309 / KCTC 3954 / HTE831).